The following is a 227-amino-acid chain: Cytochrome c oxidase subunit 2 (227 aa).

Residues 1 to 14 are Mitochondrial intermembrane-facing; that stretch reads MAYPFQLGLQDATS. The helical transmembrane segment at 15–45 threads the bilayer; sequence PIMEELTNFHDHTLMIVFLISSLVLYIISLM. Topologically, residues 46–59 are mitochondrial matrix; it reads LTTKLTHTSTMDAQ. Residues 60–87 form a helical membrane-spanning segment; it reads EVETIWTILPAVILILIALPSLRILYMM. At 88 to 227 the chain is on the mitochondrial intermembrane side; sequence DEINNPALTV…YFENWSASMI (140 aa). Residues His161, Cys196, Glu198, Cys200, His204, and Met207 each coordinate Cu cation. Glu198 contributes to the Mg(2+) binding site. Tyr218 bears the Phosphotyrosine mark.

It belongs to the cytochrome c oxidase subunit 2 family. As to quaternary structure, component of the cytochrome c oxidase (complex IV, CIV), a multisubunit enzyme composed of 14 subunits. The complex is composed of a catalytic core of 3 subunits MT-CO1, MT-CO2 and MT-CO3, encoded in the mitochondrial DNA, and 11 supernumerary subunits COX4I, COX5A, COX5B, COX6A, COX6B, COX6C, COX7A, COX7B, COX7C, COX8 and NDUFA4, which are encoded in the nuclear genome. The complex exists as a monomer or a dimer and forms supercomplexes (SCs) in the inner mitochondrial membrane with NADH-ubiquinone oxidoreductase (complex I, CI) and ubiquinol-cytochrome c oxidoreductase (cytochrome b-c1 complex, complex III, CIII), resulting in different assemblies (supercomplex SCI(1)III(2)IV(1) and megacomplex MCI(2)III(2)IV(2)). Found in a complex with TMEM177, COA6, COX18, COX20, SCO1 and SCO2. Interacts with TMEM177 in a COX20-dependent manner. Interacts with COX20. Interacts with COX16. It depends on Cu cation as a cofactor.

It localises to the mitochondrion inner membrane. It catalyses the reaction 4 Fe(II)-[cytochrome c] + O2 + 8 H(+)(in) = 4 Fe(III)-[cytochrome c] + 2 H2O + 4 H(+)(out). Functionally, component of the cytochrome c oxidase, the last enzyme in the mitochondrial electron transport chain which drives oxidative phosphorylation. The respiratory chain contains 3 multisubunit complexes succinate dehydrogenase (complex II, CII), ubiquinol-cytochrome c oxidoreductase (cytochrome b-c1 complex, complex III, CIII) and cytochrome c oxidase (complex IV, CIV), that cooperate to transfer electrons derived from NADH and succinate to molecular oxygen, creating an electrochemical gradient over the inner membrane that drives transmembrane transport and the ATP synthase. Cytochrome c oxidase is the component of the respiratory chain that catalyzes the reduction of oxygen to water. Electrons originating from reduced cytochrome c in the intermembrane space (IMS) are transferred via the dinuclear copper A center (CU(A)) of subunit 2 and heme A of subunit 1 to the active site in subunit 1, a binuclear center (BNC) formed by heme A3 and copper B (CU(B)). The BNC reduces molecular oxygen to 2 water molecules using 4 electrons from cytochrome c in the IMS and 4 protons from the mitochondrial matrix. This Oenomys hypoxanthus (Rufous-nosed rat) protein is Cytochrome c oxidase subunit 2 (MT-CO2).